Here is a 281-residue protein sequence, read N- to C-terminus: Probable endonuclease 4 (281 aa).

His69, His109, Glu145, Asp179, His182, His216, Asp229, His231, and Glu261 together coordinate Zn(2+).

Belongs to the AP endonuclease 2 family. Zn(2+) is required as a cofactor.

It catalyses the reaction Endonucleolytic cleavage to 5'-phosphooligonucleotide end-products.. Its function is as follows. Endonuclease IV plays a role in DNA repair. It cleaves phosphodiester bonds at apurinic or apyrimidinic (AP) sites, generating a 3'-hydroxyl group and a 5'-terminal sugar phosphate. The protein is Probable endonuclease 4 of Chlorobaculum parvum (strain DSM 263 / NCIMB 8327) (Chlorobium vibrioforme subsp. thiosulfatophilum).